We begin with the raw amino-acid sequence, 907 residues long: Protein translocase subunit SecA (907 aa).

Residues Q87, 105 to 109 (GEGKT), and D512 each bind ATP. The disordered stretch occupies residues 834–907 (QEDVERMEEQ…KKYKQCHGKI (74 aa)). Basic and acidic residues-rich tracts occupy residues 836 to 853 (DVER…EAAR) and 873 to 888 (EEAH…KVGR). Residues C892, C894, C903, and H904 each coordinate Zn(2+). The segment covering 898–907 (KKYKQCHGKI) has biased composition (basic residues).

The protein belongs to the SecA family. Monomer and homodimer. Part of the essential Sec protein translocation apparatus which comprises SecA, SecYEG and auxiliary proteins SecDF-YajC and YidC. It depends on Zn(2+) as a cofactor.

It is found in the cell inner membrane. Its subcellular location is the cytoplasm. It carries out the reaction ATP + H2O + cellular proteinSide 1 = ADP + phosphate + cellular proteinSide 2.. In terms of biological role, part of the Sec protein translocase complex. Interacts with the SecYEG preprotein conducting channel. Has a central role in coupling the hydrolysis of ATP to the transfer of proteins into and across the cell membrane, serving both as a receptor for the preprotein-SecB complex and as an ATP-driven molecular motor driving the stepwise translocation of polypeptide chains across the membrane. The polypeptide is Protein translocase subunit SecA (Aliivibrio fischeri (strain MJ11) (Vibrio fischeri)).